The following is a 191-amino-acid chain: Peptidyl-tRNA hydrolase (191 aa).

Tyrosine 14 provides a ligand contact to tRNA. The active-site Proton acceptor is the histidine 19. The tRNA site is built by tyrosine 64, asparagine 66, and asparagine 112.

This sequence belongs to the PTH family. Monomer.

Its subcellular location is the cytoplasm. The catalysed reaction is an N-acyl-L-alpha-aminoacyl-tRNA + H2O = an N-acyl-L-amino acid + a tRNA + H(+). Hydrolyzes ribosome-free peptidyl-tRNAs (with 1 or more amino acids incorporated), which drop off the ribosome during protein synthesis, or as a result of ribosome stalling. Functionally, catalyzes the release of premature peptidyl moieties from peptidyl-tRNA molecules trapped in stalled 50S ribosomal subunits, and thus maintains levels of free tRNAs and 50S ribosomes. This chain is Peptidyl-tRNA hydrolase, found in Syntrophotalea carbinolica (strain DSM 2380 / NBRC 103641 / GraBd1) (Pelobacter carbinolicus).